Consider the following 342-residue polypeptide: Anthranilate phosphoribosyltransferase (342 aa).

5-phospho-alpha-D-ribose 1-diphosphate-binding positions include glycine 84, glycine 87–aspartate 88, threonine 92, asparagine 94–threonine 97, lysine 112–serine 120, and serine 124. Anthranilate is bound at residue glycine 84. Threonine 96 contacts Mg(2+). Position 115 (asparagine 115) interacts with anthranilate. Residue arginine 170 coordinates anthranilate. Mg(2+)-binding residues include aspartate 228 and glutamate 229.

Belongs to the anthranilate phosphoribosyltransferase family. As to quaternary structure, homodimer. Requires Mg(2+) as cofactor.

The enzyme catalyses N-(5-phospho-beta-D-ribosyl)anthranilate + diphosphate = 5-phospho-alpha-D-ribose 1-diphosphate + anthranilate. Its pathway is amino-acid biosynthesis; L-tryptophan biosynthesis; L-tryptophan from chorismate: step 2/5. Functionally, catalyzes the transfer of the phosphoribosyl group of 5-phosphorylribose-1-pyrophosphate (PRPP) to anthranilate to yield N-(5'-phosphoribosyl)-anthranilate (PRA). This is Anthranilate phosphoribosyltransferase from Corynebacterium efficiens (strain DSM 44549 / YS-314 / AJ 12310 / JCM 11189 / NBRC 100395).